The primary structure comprises 1374 residues: F-actin-uncapping protein LRRC16A (1374 aa).

Met1 is modified (N-acetylmethionine). Ser122 is subject to Phosphoserine. LRR repeat units lie at residues 245–269 (SNRL…LAGA), 275–298 (NSGL…SLSI), 304–327 (PKGL…SLCQ), 336–363 (ASTL…FLAQ), 391–418 (LQCL…SFKQ), 423–447 (SLAL…LLLG), 485–510 (IHNI…VWLS), 547–570 (DSPL…IINA), 574–597 (NTSL…MLAK), and 658–682 (LQKI…AYRL). Residues 714-738 (GDAIQEDLKAAERLMRDAKNSKTLL) are a coiled coil. Thr920 bears the Phosphothreonine mark. Disordered stretches follow at residues 961 to 982 (PFPS…PSEE) and 1040 to 1374 (KMDC…FIFV). The stretch at 962–985 (FPSVRQEKRSSGLISELPSEEGRR) is one LRR 11 repeat. The segment at 962–1084 (FPSVRQEKRS…LIKSRSRSER (123 aa)) is inhibits capping activity of CP. Ser972 carries the post-translational modification Phosphoserine. A compositionally biased stretch (basic and acidic residues) spans 1040 to 1064 (KMDCKRSSSRSSDAHELGEGDEKKK). A necessary for localization at the cell membrane region spans residues 1058-1092 (EGDEKKKRDSRRSGFLNLIKSRSRSERPPTVLMTE). Ser1096 carries the post-translational modification Phosphoserine. Basic and acidic residues-rich tracts occupy residues 1108 to 1132 (TTRK…KTPE) and 1141 to 1150 (EAGRAERSDS). Over residues 1191–1204 (VISQDPSSPVSCNT) the composition is skewed to polar residues. Thr1229 is subject to Phosphothreonine. Over residues 1232-1244 (KNAKAEPRVDGGC) the composition is skewed to basic and acidic residues. Low complexity predominate over residues 1245-1263 (RSRSSSSMPTSPKPLLQSP). Ser1281, Ser1289, Ser1291, Ser1295, Ser1319, Ser1328, and Ser1335 each carry phosphoserine. Residues 1317–1330 (QNSSQSSPRSFSQE) are compositionally biased toward low complexity. The span at 1343–1356 (QEQKQRSSGKDGHQ) shows a compositional bias: basic and acidic residues. At Ser1363 the chain carries Phosphoserine.

The protein belongs to the CARMIL family. Homodimer. Interacts (via C-terminus) with heterodimeric capping protein (CP); this interaction uncaps barbed ends capped by CP, enhances barbed-end actin polymerization and promotes lamellipodial formation and cell migration. Interacts with MYO1E. Interacts with TRIO.

It localises to the cytoplasm. The protein localises to the cytoskeleton. Its subcellular location is the cell membrane. The protein resides in the cell projection. It is found in the lamellipodium. Functionally, cell membrane-cytoskeleton-associated protein that plays a role in the regulation of actin polymerization at the barbed end of actin filaments. Prevents F-actin heterodimeric capping protein (CP) activity at the leading edges of migrating cells, and hence generates uncapped barbed ends and enhances actin polymerization, however, seems unable to nucleate filaments. Plays a role in lamellipodial protrusion formations and cell migration. The sequence is that of F-actin-uncapping protein LRRC16A from Mus musculus (Mouse).